Reading from the N-terminus, the 170-residue chain is Transmembrane protein 252 (170 aa).

Helical transmembrane passes span 8–28 (ILCA…AFFI) and 40–60 (LIAA…GIFW). Positions 112–147 (CPAEREASGIPPPLYTETGLEFQDGNDSHPEAPPSY) are disordered.

The protein localises to the membrane. The chain is Transmembrane protein 252 (TMEM252) from Homo sapiens (Human).